We begin with the raw amino-acid sequence, 157 residues long: 2-C-methyl-D-erythritol 2,4-cyclodiphosphate synthase (157 aa).

Residues aspartate 8, histidine 10, and histidine 42 each contribute to the a divalent metal cation site. Residue 8 to 10 (DVH) coordinates 4-CDP-2-C-methyl-D-erythritol 2-phosphate. Residues 56–58 (DIG), 132–135 (STSE), phenylalanine 139, and arginine 142 each bind 4-CDP-2-C-methyl-D-erythritol 2-phosphate.

This sequence belongs to the IspF family. Homotrimer. Requires a divalent metal cation as cofactor.

The enzyme catalyses 4-CDP-2-C-methyl-D-erythritol 2-phosphate = 2-C-methyl-D-erythritol 2,4-cyclic diphosphate + CMP. It participates in isoprenoid biosynthesis; isopentenyl diphosphate biosynthesis via DXP pathway; isopentenyl diphosphate from 1-deoxy-D-xylulose 5-phosphate: step 4/6. Functionally, involved in the biosynthesis of isopentenyl diphosphate (IPP) and dimethylallyl diphosphate (DMAPP), two major building blocks of isoprenoid compounds. Catalyzes the conversion of 4-diphosphocytidyl-2-C-methyl-D-erythritol 2-phosphate (CDP-ME2P) to 2-C-methyl-D-erythritol 2,4-cyclodiphosphate (ME-CPP) with a corresponding release of cytidine 5-monophosphate (CMP). The chain is 2-C-methyl-D-erythritol 2,4-cyclodiphosphate synthase from Dehalococcoides mccartyi (strain CBDB1).